The chain runs to 320 residues: uncharacterized protein (320 aa).

7 helical membrane passes run 107-127 (LSKE…AGIY), 131-151 (VALL…IALS), 169-189 (LIAE…YLPI), 200-220 (ITLD…GSLS), 228-248 (IAVG…FGLL), 260-280 (ALIL…VIFS), and 299-319 (TLYA…LIIY).

It is found in the cell membrane. This is an uncharacterized protein from Methanocaldococcus jannaschii (strain ATCC 43067 / DSM 2661 / JAL-1 / JCM 10045 / NBRC 100440) (Methanococcus jannaschii).